The sequence spans 201 residues: Protein tirC (201 aa).

A TIR domain is found at 52–186; it reads ERIKVFIVHG…YVWINYTEDL (135 aa).

The polypeptide is Protein tirC (tirC) (Dictyostelium discoideum (Social amoeba)).